Consider the following 352-residue polypeptide: Photosystem II D2 protein (352 aa).

T2 bears the N-acetylthreonine mark. T2 is subject to Phosphothreonine. The chain crosses the membrane as a helical span at residues 40 to 60 (CAYFALGGWLTGTTFVTSWYT). Chlorophyll a is bound at residue H117. The helical transmembrane segment at 124-140 (GFMLRQFEIARSVNLRP) threads the bilayer. Residues Q129 and N142 each coordinate pheophytin a. The helical transmembrane segment at 152–165 (VFVSVFLIYPLGQS) threads the bilayer. Chlorophyll a is bound at residue H197. The chain crosses the membrane as a helical span at residues 207–227 (AALLCAIHGATVENTLFEDGD). Residues H214 and F261 each contribute to the a plastoquinone site. H214 provides a ligand contact to Fe cation. Position 268 (H268) interacts with Fe cation. Residues 278 to 294 (GLWMSAIGVVGLALNLR) traverse the membrane as a helical segment.

Belongs to the reaction center PufL/M/PsbA/D family. In terms of assembly, PSII is composed of 1 copy each of membrane proteins PsbA, PsbB, PsbC, PsbD, PsbE, PsbF, PsbH, PsbI, PsbJ, PsbK, PsbL, PsbM, PsbT, PsbX, PsbY, PsbZ, Psb30/Ycf12, at least 3 peripheral proteins of the oxygen-evolving complex and a large number of cofactors. It forms dimeric complexes. The D1/D2 heterodimer binds P680, chlorophylls that are the primary electron donor of PSII, and subsequent electron acceptors. It shares a non-heme iron and each subunit binds pheophytin, quinone, additional chlorophylls, carotenoids and lipids. There is also a Cl(-1) ion associated with D1 and D2, which is required for oxygen evolution. The PSII complex binds additional chlorophylls, carotenoids and specific lipids. serves as cofactor. In terms of processing, phosphorylated in vitro.

The protein resides in the plastid. It localises to the chloroplast thylakoid membrane. The enzyme catalyses 2 a plastoquinone + 4 hnu + 2 H2O = 2 a plastoquinol + O2. In terms of biological role, photosystem II (PSII) is a light-driven water:plastoquinone oxidoreductase that uses light energy to abstract electrons from H(2)O, generating O(2) and a proton gradient subsequently used for ATP formation. It consists of a core antenna complex that captures photons, and an electron transfer chain that converts photonic excitation into a charge separation. The D1/D2 (PsbA/PsbD) reaction center heterodimer binds P680, the primary electron donor of PSII as well as several subsequent electron acceptors. D2 is needed for assembly of a stable PSII complex. In Chlamydomonas reinhardtii (Chlamydomonas smithii), this protein is Photosystem II D2 protein.